A 104-amino-acid polypeptide reads, in one-letter code: N(4)-acetylcytidine amidohydrolase (104 aa).

Residues 6–102 enclose the ASCH domain; it reads TFYTRFQQDI…ELYVIAFKKV (97 aa). Catalysis depends on Lys20, which acts as the Proton acceptor. Thr23 functions as the Nucleophile in the catalytic mechanism. The Proton donor role is filled by Glu73.

The protein belongs to the N(4)-acetylcytidine amidohydrolase family.

It catalyses the reaction N(4)-acetylcytidine + H2O = cytidine + acetate + H(+). It carries out the reaction N(4)-acetyl-2'-deoxycytidine + H2O = 2'-deoxycytidine + acetate + H(+). The enzyme catalyses N(4)-acetylcytosine + H2O = cytosine + acetate + H(+). In terms of biological role, catalyzes the hydrolysis of N(4)-acetylcytidine (ac4C). In Cronobacter sakazakii (strain ATCC BAA-894) (Enterobacter sakazakii), this protein is N(4)-acetylcytidine amidohydrolase.